Here is a 207-residue protein sequence, read N- to C-terminus: Cytidylyl-2-hydroxypropylphosphonate hydrolase (207 aa).

CDP contacts are provided by W68, R74, Q76, and S77. A divalent metal cation is bound by residues N109, D125, E127, and D129. CDP is bound at residue K142. The Proton donor role is filled by K142. D143 provides a ligand contact to a divalent metal cation.

The protein belongs to the FomD family. Mn(2+) is required as a cofactor. Requires Co(2+) as cofactor.

It carries out the reaction cytidine 5'-({hydroxy[(S)-2-hydroxypropyl]phosphonoyl}phosphate) + H2O = (S)-2-hydroxypropylphosphonate + CMP + H(+). It functions in the pathway antibiotic biosynthesis; fosfomycin biosynthesis. Its activity is regulated as follows. Hydrolysis of (S)-HPP-CMP is inhibited by CDP. Its function is as follows. Involved in fosfomycin biosynthesis. Catalyzes the hydrolysis of cytidylyl (S)-2-hydroxypropylphosphonate ((S)-HPP-CMP) to give (S)-2-hydroxypropylphosphonate ((S)-HPP) and CMP. Can also hydrolyze (R)-HPP-CMP and cytidylyl 2-hydroxyethylphosphonate (HEP-CMP), which is a biosynthetic intermediate before C-methylation, but the catalytic efficiency is much higher with (S)-HPP-CMP. The protein is Cytidylyl-2-hydroxypropylphosphonate hydrolase of Streptomyces fradiae (Streptomyces roseoflavus).